A 314-amino-acid chain; its full sequence is tRNA pseudouridine synthase B (314 aa).

Histidine 43 is a binding site for substrate. Catalysis depends on aspartate 48, which acts as the Nucleophile. Positions 76, 179, and 200 each coordinate substrate.

This sequence belongs to the pseudouridine synthase TruB family. Type 1 subfamily.

The enzyme catalyses uridine(55) in tRNA = pseudouridine(55) in tRNA. Responsible for synthesis of pseudouridine from uracil-55 in the psi GC loop of transfer RNAs. The chain is tRNA pseudouridine synthase B from Salmonella choleraesuis (strain SC-B67).